A 399-amino-acid chain; its full sequence is Formate-dependent phosphoribosylglycinamide formyltransferase (399 aa).

N(1)-(5-phospho-beta-D-ribosyl)glycinamide is bound by residues 8–9 (EL) and Glu68. ATP-binding positions include Arg100, Lys141, 146–151 (SSGHGQ), 185–188 (EALA), and Glu193. One can recognise an ATP-grasp domain in the interval 105–308 (VLAHEELGLP…EFALHARAIL (204 aa)). Residues Glu266 and Glu279 each contribute to the Mg(2+) site. N(1)-(5-phospho-beta-D-ribosyl)glycinamide is bound by residues Asp286, Lys361, and 368 to 369 (RR).

The protein belongs to the PurK/PurT family. In terms of assembly, homodimer.

It carries out the reaction N(1)-(5-phospho-beta-D-ribosyl)glycinamide + formate + ATP = N(2)-formyl-N(1)-(5-phospho-beta-D-ribosyl)glycinamide + ADP + phosphate + H(+). It participates in purine metabolism; IMP biosynthesis via de novo pathway; N(2)-formyl-N(1)-(5-phospho-D-ribosyl)glycinamide from N(1)-(5-phospho-D-ribosyl)glycinamide (formate route): step 1/1. Functionally, involved in the de novo purine biosynthesis. Catalyzes the transfer of formate to 5-phospho-ribosyl-glycinamide (GAR), producing 5-phospho-ribosyl-N-formylglycinamide (FGAR). Formate is provided by PurU via hydrolysis of 10-formyl-tetrahydrofolate. The sequence is that of Formate-dependent phosphoribosylglycinamide formyltransferase from Bifidobacterium adolescentis (strain ATCC 15703 / DSM 20083 / NCTC 11814 / E194a).